Here is a 211-residue protein sequence, read N- to C-terminus: NEDD4 family-interacting protein 1 (211 aa).

Over residues 1 to 13 the composition is skewed to polar residues; the sequence is MSEQSSSRYQQLQ. Residues 1–48 are disordered; sequence MSEQSSSRYQQLQNEEEPGENPQASTDAPPPYSSIAGESSGLFDYKDE. At 1-106 the chain is on the cytoplasmic side; the sequence is MSEQSSSRYQ…ADQLRIGNDG (106 aa). Short sequence motifs (PPxY motif) lie at residues 29-32 and 54-57; these read PPPY and PPSY. Residues 107–127 form a helical membrane-spanning segment; that stretch reads IFMLTFFMAFLFNWIGFFLSF. The Extracellular portion of the chain corresponds to 128–133; it reads CLTSSA. The helical transmembrane segment at 134 to 154 threads the bilayer; sequence AGRYGAISGFGLSLIKWILIV. Topologically, residues 155–162 are cytoplasmic; the sequence is RFSTYFPG. The chain crosses the membrane as a helical span at residues 163 to 183; that stretch reads YFDGQYWLWWVFLVLGFLLFL. Over 184 to 211 the chain is Extracellular; sequence RGFINYAKVRKMPDNFSTLPRTRVLFIY.

The protein localises to the golgi apparatus membrane. Functionally, may play a role in Golgi structure maintenance. This Xenopus tropicalis (Western clawed frog) protein is NEDD4 family-interacting protein 1 (ndfip1).